The sequence spans 91 residues: Small integral membrane protein 13 (91 aa).

Residues 10-30 (LVFVATLLIVLLLMVCGWYFV) form a helical membrane-spanning segment. Residues 47–91 (DTGSQEGDHEPSGSETEEDTSSSPHRIRSARQRRAPADEGHRPLT) are disordered. Serine 58 and serine 60 each carry phosphoserine. Threonine 62 carries the phosphothreonine modification. Serine 69 bears the Phosphoserine mark. Positions 71–80 (HRIRSARQRR) are enriched in basic residues. Residues 81–91 (APADEGHRPLT) are compositionally biased toward basic and acidic residues.

This sequence belongs to the SMIM13 family.

It is found in the membrane. In Homo sapiens (Human), this protein is Small integral membrane protein 13 (SMIM13).